The chain runs to 207 residues: Superoxide dismutase [Mn] (207 aa).

Residues histidine 28, histidine 76, aspartate 160, and histidine 164 each contribute to the Mn(2+) site.

It belongs to the iron/manganese superoxide dismutase family. Requires Mn(2+) as cofactor.

The catalysed reaction is 2 superoxide + 2 H(+) = H2O2 + O2. Functionally, destroys superoxide anion radicals which are normally produced within the cells and which are toxic to biological systems. In Mycobacterium lepraemurium, this protein is Superoxide dismutase [Mn] (sodA).